A 179-amino-acid chain; its full sequence is uncharacterized protein (179 aa).

4 helical membrane-spanning segments follow: residues 9-31 (WILV…VSTL), 41-63 (AFLL…YGSF), 114-136 (AYYG…LLGA), and 146-168 (AFWG…NYLM).

Its subcellular location is the cell membrane. This is an uncharacterized protein from Aquifex aeolicus (strain VF5).